The primary structure comprises 486 residues: 2-succinylbenzoate--CoA ligase (486 aa).

Belongs to the ATP-dependent AMP-binding enzyme family. MenE subfamily.

It carries out the reaction 2-succinylbenzoate + ATP + CoA = 2-succinylbenzoyl-CoA + AMP + diphosphate. Its pathway is quinol/quinone metabolism; 1,4-dihydroxy-2-naphthoate biosynthesis; 1,4-dihydroxy-2-naphthoate from chorismate: step 5/7. It functions in the pathway quinol/quinone metabolism; menaquinone biosynthesis. In terms of biological role, converts 2-succinylbenzoate (OSB) to 2-succinylbenzoyl-CoA (OSB-CoA). In Bacillus subtilis (strain 168), this protein is 2-succinylbenzoate--CoA ligase.